A 103-amino-acid chain; its full sequence is Histone H4 (103 aa).

A compositionally biased stretch (gly residues) spans 1–14 (MTGRGKGGKGLGKG). The interval 1 to 20 (MTGRGKGGKGLGKGGAKRHR) is disordered. Thr2 carries the post-translational modification N-acetylthreonine. Lys6 carries the post-translational modification N6-acetyl-N6-methyllysine; alternate. An N6-acetyllysine mark is found at Lys6, Lys9, Lys13, and Lys17. Lys13 bears the N6-acetyl-N6-methyllysine; alternate mark. The residue at position 21 (Lys21) is an N6,N6-dimethyllysine. Residue Lys32 is modified to N6-methyllysine.

The protein belongs to the histone H4 family. As to quaternary structure, the nucleosome is a histone octamer containing two molecules each of H2A, H2B, H3 and H4 assembled in one H3-H4 heterotetramer and two H2A-H2B heterodimers. The octamer wraps approximately 147 bp of DNA.

It is found in the nucleus. The protein localises to the chromosome. Its function is as follows. Core component of nucleosome. Nucleosomes wrap and compact DNA into chromatin, limiting DNA accessibility to the cellular machineries which require DNA as a template. Histones thereby play a central role in transcription regulation, DNA repair, DNA replication and chromosomal stability. DNA accessibility is regulated via a complex set of post-translational modifications of histones, also called histone code, and nucleosome remodeling. Functionally, a mixture of histones H2B and H4 has antimicrobial activity against the Gram-positive bacterium M.luteus. This Penaeus vannamei (Whiteleg shrimp) protein is Histone H4.